The sequence spans 591 residues: Protein kinase C zeta type (591 aa).

A PB1 domain is found at 15 to 98 (RVRLKAHYSG…DGLILHVFPS (84 aa)). The tract at residues 79-145 (AFRLAGQHRD…KRFNRRAYCG (67 aa)) is interaction with SQSTM1. The Phorbol-ester/DAG-type zinc-finger motif lies at 130-180 (GHLFQAKRFNRRAYCGQCSERIWGLARQGYRCINCKLLVHKRCHGLVPLTC). Residues 251 to 517 (FDLIRVIGRG…FSDIKSHAFF (267 aa)) form the Protein kinase domain. Residues 257 to 265 (IGRGSYAKV) and K280 contribute to the ATP site. Catalysis depends on D375, which acts as the Proton acceptor. T409 is modified (phosphothreonine; by PDPK1 and PI3K). In terms of domain architecture, AGC-kinase C-terminal spans 518–589 (RSIDWDLLEK…INPLLLSTEE (72 aa)). T559 carries the post-translational modification Phosphothreonine. S590 carries the post-translational modification Phosphoserine.

The protein belongs to the protein kinase superfamily. AGC Ser/Thr protein kinase family. PKC subfamily. In terms of assembly, interacts with PARD6A, PARD6B and PARD6G. Part of a complex with PARD3, PARD6A or PARD6B or PARD6G and CDC42 or RAC1. Interacts with ADAP1/CENTA1. Interacts directly with SQSTM1. Forms a ternary complex with SQSTM1 and KCNAB2. Forms another ternary complex with SQSTM1 and GABRR3. Forms a complex with SQSTM1 and MAP2K5. Interacts (via the protein kinase domain) with WWC1. Forms a tripartite complex with WWC1 and DDR1, but predominantly in the absence of collagen. Component of the Par polarity complex, composed of at least phosphorylated PRKCZ, PARD3 and TIAM1. Interacts with PDPK1 (via N-terminal region). Interacts with WDFY2 (via WD repeats 1-3). Interacts with VAMP2. Forms a complex with WDFY2 and VAMP2. Interacts with APPL1. Interacts with WWC1, WWC2 and WWC3. Post-translationally, CDH5 is required for its phosphorylation at Thr-409. Phosphorylated by protein kinase PDPK1; phosphorylation is inhibited by the apoptotic C-terminal cleavage product of PKN2. Phosphorylation at Thr-409 by PI3K activates the kinase.

It is found in the cytoplasm. It localises to the endosome. The protein resides in the cell junction. The protein localises to the membrane. The enzyme catalyses L-seryl-[protein] + ATP = O-phospho-L-seryl-[protein] + ADP + H(+). It carries out the reaction L-threonyl-[protein] + ATP = O-phospho-L-threonyl-[protein] + ADP + H(+). Atypical PKCs (PRKCI and PRKCZ) exhibit an elevated basal enzymatic activity (that may be due to the interaction with SMG1 or SQSTM1) and are not regulated by diacylglycerol, phosphatidylserine, phorbol esters or calcium ions. Two specific sites, Thr-409 (activation loop of the kinase domain) and Thr-559 (turn motif), need to be phosphorylated for its full activation. Phosphatidylinositol 3,4,5-trisphosphate might be a physiological activator. Its function is as follows. Calcium- and diacylglycerol-independent serine/threonine-protein kinase that functions in phosphatidylinositol 3-kinase (PI3K) pathway and mitogen-activated protein (MAP) kinase cascade, and is involved in NF-kappa-B activation, mitogenic signaling, cell proliferation, cell polarity, inflammatory response and maintenance of long-term potentiation (LTP). Upon lipopolysaccharide (LPS) treatment in macrophages, or following mitogenic stimuli, functions downstream of PI3K to activate MAP2K1/MEK1-MAPK1/ERK2 signaling cascade independently of RAF1 activation. Required for insulin-dependent activation of AKT3, but may function as an adapter rather than a direct activator. Upon insulin treatment may act as a downstream effector of PI3K and contribute to the activation of translocation of the glucose transporter SLC2A4/GLUT4 and subsequent glucose transport in adipocytes. In EGF-induced cells, binds and activates MAP2K5/MEK5-MAPK7/ERK5 independently of its kinase activity and can activate JUN promoter through MEF2C. Through binding with SQSTM1/p62, functions in interleukin-1 signaling and activation of NF-kappa-B with the specific adapters RIPK1 and TRAF6. Participates in TNF-dependent transactivation of NF-kappa-B by phosphorylating and activating IKBKB kinase, which in turn leads to the degradation of NF-kappa-B inhibitors. In migrating astrocytes, forms a cytoplasmic complex with PARD6A and is recruited by CDC42 to function in the establishment of cell polarity along with the microtubule motor and dynein. In association with FEZ1, stimulates neuronal differentiation in PC12 cells. In the inflammatory response, is required for the T-helper 2 (Th2) differentiation process, including interleukin production, efficient activation of JAK1 and the subsequent phosphorylation and nuclear translocation of STAT6. May be involved in development of allergic airway inflammation (asthma), a process dependent on Th2 immune response. In the NF-kappa-B-mediated inflammatory response, can relieve SETD6-dependent repression of NF-kappa-B target genes by phosphorylating the RELA subunit at 'Ser-311'. Phosphorylates VAMP2 in vitro. Phosphorylates and activates LRRK1, which phosphorylates RAB proteins involved in intracellular trafficking. The sequence is that of Protein kinase C zeta type (PRKCZ) from Oryctolagus cuniculus (Rabbit).